Reading from the N-terminus, the 234-residue chain is NLP effector protein Pc576423 (234 aa).

The first 18 residues, 1 to 18 (MNLRAIAVTFATFAGANA), serve as a signal peptide directing secretion. N-linked (GlcNAc...) asparagine glycosylation is found at Asn35 and Asn66. Residues 119–125 (GHRHDWE) carry the Hepta-peptide GHRHDWE motif motif.

This sequence belongs to the Necrosis inducing protein (NPP1) family.

It is found in the secreted. Secreted effector that contributes strongly to virulence during infection by P.capsici. In Phytophthora capsici, this protein is NLP effector protein Pc576423.